The sequence spans 313 residues: MDSDDSFVKTAHVIETSTPENKKLSHRFKSVEIVPPSSSNDDPFGFSSTKGIRLSSINSNDLVNTLSKGFNETSNMSYNRILPSSPPTLEIGEIDYNEALQIRSADENQQSVPTVSIASPSTPELPPSSSPLLPPNGSESSSPIPLSLLSTSSLQQRKITPSNLSNTSKPMDSKQLERLIPVPHGHHLTRLRKKRRRDDDIDLSGLYETKSSSPPAIHSDEDPSYSDSIARSPVKSAFNLRKRRKGVKEKKILKTYHSQDKDTASDNDNNTGSSDEENDNLKELTPGKKEYLKSIKKYFQDVDDYQLHVVNEG.

Positions 44 to 46 match the FGF motif motif; the sequence is FGF. A disordered region spans residues 105-287; sequence ADENQQSVPT…NDNLKELTPG (183 aa). Positions 107–118 are enriched in polar residues; it reads ENQQSVPTVSIA. Over residues 123 to 134 the composition is skewed to pro residues; that stretch reads PELPPSSSPLLP. Residues 135–154 show a composition bias toward low complexity; it reads PNGSESSSPIPLSLLSTSSL. Positions 155 to 170 are enriched in polar residues; sequence QQRKITPSNLSNTSKP. Basic residues predominate over residues 184–196; it reads HGHHLTRLRKKRR. The segment covering 249–264 has biased composition (basic and acidic residues); it reads EKKILKTYHSQDKDTA. Positions 288-310 are C-terminal Sororin domain; sequence KKEYLKSIKKYFQDVDDYQLHVV.

Belongs to the sororin family. As to quaternary structure, interacts with Pds5 and Psm3.

The protein localises to the nucleus. Its function is as follows. Regulator of sister chromatid cohesion in mitosis stabilizing cohesin complex association with chromatin. Antagonizes the action of wpl1 which stimulates cohesin dissociation from chromatin. Cohesion ensures that chromosome partitioning is accurate in dividing cells and may play an important role in DNA repair. The sequence is that of Sororin-like protein 1 from Schizosaccharomyces pombe (strain 972 / ATCC 24843) (Fission yeast).